Here is a 203-residue protein sequence, read N- to C-terminus: A-type ATP synthase subunit E (203 aa).

Belongs to the V-ATPase E subunit family. As to quaternary structure, has multiple subunits with at least A(3), B(3), C, D, E, F, H, I and proteolipid K(x).

It localises to the cell membrane. Functionally, component of the A-type ATP synthase that produces ATP from ADP in the presence of a proton gradient across the membrane. The polypeptide is A-type ATP synthase subunit E (Thermococcus onnurineus (strain NA1)).